The sequence spans 119 residues: MGYTLFRFIVPFNPYFSSFYPSFPFYLSFPFCPSFPSFLSFPSSIFSLSFPSFLHHHLLIFSSLRIPFPWFLPLLQLVYLCYKVPWLLEWLIHSSKLAYQCCRILIFAQLVSLVRNQKH.

Transmembrane regions (helical) follow at residues 19–39 (FYPS…PSFL) and 68–88 (FPWF…PWLL).

Its subcellular location is the membrane. This is an uncharacterized protein from Saccharomyces cerevisiae (strain ATCC 204508 / S288c) (Baker's yeast).